Here is a 616-residue protein sequence, read N- to C-terminus: Chaperone protein HscA homolog (616 aa).

This sequence belongs to the heat shock protein 70 family.

Chaperone involved in the maturation of iron-sulfur cluster-containing proteins. Has a low intrinsic ATPase activity which is markedly stimulated by HscB. The protein is Chaperone protein HscA homolog of Histophilus somni (strain 129Pt) (Haemophilus somnus).